A 75-amino-acid polypeptide reads, in one-letter code: Small ribosomal subunit protein bS18 (75 aa).

It belongs to the bacterial ribosomal protein bS18 family. As to quaternary structure, part of the 30S ribosomal subunit. Forms a tight heterodimer with protein bS6.

Its function is as follows. Binds as a heterodimer with protein bS6 to the central domain of the 16S rRNA, where it helps stabilize the platform of the 30S subunit. This Pasteurella multocida (strain Pm70) protein is Small ribosomal subunit protein bS18.